A 355-amino-acid polypeptide reads, in one-letter code: Peptide chain release factor 1 (355 aa).

Gln-231 is modified (N5-methylglutamine).

It belongs to the prokaryotic/mitochondrial release factor family. In terms of processing, methylated by PrmC. Methylation increases the termination efficiency of RF1.

Its subcellular location is the cytoplasm. Peptide chain release factor 1 directs the termination of translation in response to the peptide chain termination codons UAG and UAA. In Wolinella succinogenes (strain ATCC 29543 / DSM 1740 / CCUG 13145 / JCM 31913 / LMG 7466 / NCTC 11488 / FDC 602W) (Vibrio succinogenes), this protein is Peptide chain release factor 1.